A 177-amino-acid chain; its full sequence is MEDKEEKKAPSVIDRYFTRWYRTDLKGKPCEDHCILQHSNRICVITLAESHPIFQNGRKIKNINYQISDGCSRLKNKVSGKSKRGGQFLTEFAPLCRITCTDEQEFTIFSCIRGRLLEVNEVILNKPDLLMEKPSTEGYIAVILPKFEESKSVTEGLLTREQYEEILTKRNQQEVPC.

Belongs to the ABITRAM family.

It is found in the nucleus speckle. The protein resides in the cell projection. It localises to the lamellipodium. The protein localises to the nucleus. Its subcellular location is the growth cone. It is found in the dendrite. Its function is as follows. May regulate actin polymerization, filopodia dynamics and arborization of neurons. This Danio rerio (Zebrafish) protein is Protein Abitram (abitram).